A 213-amino-acid polypeptide reads, in one-letter code: Protein-L-isoaspartate O-methyltransferase (213 aa).

Ser64 is a catalytic residue.

Belongs to the methyltransferase superfamily. L-isoaspartyl/D-aspartyl protein methyltransferase family.

The protein resides in the cytoplasm. It carries out the reaction [protein]-L-isoaspartate + S-adenosyl-L-methionine = [protein]-L-isoaspartate alpha-methyl ester + S-adenosyl-L-homocysteine. Catalyzes the methyl esterification of L-isoaspartyl residues in peptides and proteins that result from spontaneous decomposition of normal L-aspartyl and L-asparaginyl residues. It plays a role in the repair and/or degradation of damaged proteins. In Flavobacterium psychrophilum (strain ATCC 49511 / DSM 21280 / CIP 103535 / JIP02/86), this protein is Protein-L-isoaspartate O-methyltransferase.